The following is a 106-amino-acid chain: Large ribosomal subunit protein eL42 (106 aa).

Positions 36 to 56 (FAQGKRRYDRKQSGYGGQTKP) are disordered.

This sequence belongs to the eukaryotic ribosomal protein eL42 family.

This Phaffia rhodozyma (Yeast) protein is Large ribosomal subunit protein eL42 (RPL44).